A 655-amino-acid polypeptide reads, in one-letter code: p-hydroxybenzoic acid efflux pump subunit AaeB (655 aa).

Transmembrane regions (helical) follow at residues 13–33 (FAVKLATAIVLALFVGFHFQL), 38–58 (WAVLTAAIVAAGPAFAAGGEP), 69–89 (LRIIGTFIGCIAGLVIIIAMI), 93–113 (LLMILVCCIWAGFCTWISSLV), 121–141 (WGLAGYTALIIVITIQPEPLL), 152–172 (EIVIGIVCAIMADLLFSPRSI), 370–390 (LFWLWTGWTSGSGAMVMIAVV), 407–427 (FIYGTLAALPLGLLYFLVIIP), 431–451 (QSMLLLCISLAVLGFFLGIEV), 459–479 (MGALASTINIIVLDNPMTFHF), and 482–502 (FLDSALGQIVGCVLAFTVILL).

The protein belongs to the aromatic acid exporter ArAE (TC 2.A.85) family.

The protein resides in the cell inner membrane. Forms an efflux pump with AaeA. Could function as a metabolic relief valve, allowing to eliminate certain compounds when they accumulate to high levels in the cell. This chain is p-hydroxybenzoic acid efflux pump subunit AaeB, found in Escherichia coli (strain K12 / MC4100 / BW2952).